The sequence spans 227 residues: Cytidylate kinase (227 aa).

ATP is bound at residue 12–20 (GPSGAGKGT).

The protein belongs to the cytidylate kinase family. Type 1 subfamily.

It is found in the cytoplasm. It catalyses the reaction CMP + ATP = CDP + ADP. The enzyme catalyses dCMP + ATP = dCDP + ADP. This is Cytidylate kinase from Enterobacter sp. (strain 638).